Here is a 269-residue protein sequence, read N- to C-terminus: GTP cyclohydrolase FolE2 (269 aa).

This sequence belongs to the GTP cyclohydrolase IV family.

The catalysed reaction is GTP + H2O = 7,8-dihydroneopterin 3'-triphosphate + formate + H(+). Its pathway is cofactor biosynthesis; 7,8-dihydroneopterin triphosphate biosynthesis; 7,8-dihydroneopterin triphosphate from GTP: step 1/1. Its function is as follows. Converts GTP to 7,8-dihydroneopterin triphosphate. This Burkholderia mallei (strain NCTC 10229) protein is GTP cyclohydrolase FolE2.